The sequence spans 138 residues: Small ribosomal subunit protein uS11c (138 aa).

The segment at M1 to R24 is disordered. The segment covering G9–R24 has biased composition (basic residues).

It belongs to the universal ribosomal protein uS11 family. Part of the 30S ribosomal subunit.

The protein resides in the plastid. The protein localises to the chloroplast. This chain is Small ribosomal subunit protein uS11c, found in Citrus sinensis (Sweet orange).